The following is a 573-amino-acid chain: FACT complex subunit pob3 (573 aa).

2 disordered regions span residues 153 to 174 (SDGDANAQPSGSTKNRGRKAAA) and 485 to 573 (LDND…KIGK). The span at 486-495 (DNDDMMSSDE) shows a compositional bias: acidic residues. Basic and acidic residues predominate over residues 496-505 (DGGRADRGSA). 2 stretches are compositionally biased toward acidic residues: residues 506-530 (DEDEESVDEDFQAESESDVAEEFDS) and 541-562 (AEMDDASDAGDDEEDVDMSEEE).

The protein belongs to the SSRP1 family. As to quaternary structure, forms a stable heterodimer with spt16. The spt16-pob3 dimer weakly associates with multiple molecules of nhp6 to form the FACT complex.

The protein resides in the nucleus. It localises to the chromosome. Functionally, component of the FACT complex, a general chromatin factor that acts to reorganize nucleosomes. The FACT complex is involved in multiple processes that require DNA as a template such as mRNA elongation, DNA replication and DNA repair. During transcription elongation the FACT complex acts as a histone chaperone that both destabilizes and restores nucleosomal structure. It facilitates the passage of RNA polymerase II and transcription by promoting the dissociation of one histone H2A-H2B dimer from the nucleosome, then subsequently promotes the reestablishment of the nucleosome following the passage of RNA polymerase II. The polypeptide is FACT complex subunit pob3 (pob3) (Aspergillus fumigatus (strain ATCC MYA-4609 / CBS 101355 / FGSC A1100 / Af293) (Neosartorya fumigata)).